Reading from the N-terminus, the 230-residue chain is Uracil-DNA glycosylase (230 aa).

Residue Asp-70 is the Proton acceptor of the active site.

It belongs to the uracil-DNA glycosylase (UDG) superfamily. UNG family.

The protein localises to the cytoplasm. It carries out the reaction Hydrolyzes single-stranded DNA or mismatched double-stranded DNA and polynucleotides, releasing free uracil.. Its function is as follows. Excises uracil residues from the DNA which can arise as a result of misincorporation of dUMP residues by DNA polymerase or due to deamination of cytosine. The polypeptide is Uracil-DNA glycosylase (Pseudomonas syringae pv. syringae (strain B728a)).